The sequence spans 174 residues: Co-chaperone protein HscB homolog (174 aa).

The 73-residue stretch at 2–74 folds into the J domain; the sequence is NYFELFSFTP…ILRAEHMLSL (73 aa).

This sequence belongs to the HscB family. Interacts with HscA and stimulates its ATPase activity.

Functionally, co-chaperone involved in the maturation of iron-sulfur cluster-containing proteins. Seems to help targeting proteins to be folded toward HscA. The chain is Co-chaperone protein HscB homolog from Shewanella woodyi (strain ATCC 51908 / MS32).